Consider the following 194-residue polypeptide: Putative adenylate kinase (194 aa).

Residues Gly-16, Gly-18, Lys-19, Thr-20, and Thr-21 each contribute to the ATP site. The interval 36–59 (SVGELLAGTPYVTYIPELDTYEIV) is NMP. Positions 108–118 (RRGWPLKKILD) are LID. Arg-109 is an ATP binding site.

It belongs to the adenylate kinase family. AK6 subfamily. In terms of assembly, interacts with uS11. Not a structural component of 40S pre-ribosomes, but transiently interacts with them by binding to uS11.

It carries out the reaction AMP + ATP = 2 ADP. The enzyme catalyses ATP + H2O = ADP + phosphate + H(+). In terms of biological role, broad-specificity nucleoside monophosphate (NMP) kinase that catalyzes the reversible transfer of the terminal phosphate group between nucleoside triphosphates and monophosphates. Also has ATPase activity. Involved in the late maturation steps of the 30S ribosomal particles, specifically 16S rRNA maturation. While NMP activity is not required for ribosome maturation, ATPase activity is. Associates transiently with small ribosomal subunit protein uS11. ATP hydrolysis breaks the interaction with uS11. May temporarily remove uS11 from the ribosome to enable a conformational change of the ribosomal RNA that is needed for the final maturation step of the small ribosomal subunit. The polypeptide is Putative adenylate kinase (Pyrobaculum aerophilum (strain ATCC 51768 / DSM 7523 / JCM 9630 / CIP 104966 / NBRC 100827 / IM2)).